The chain runs to 127 residues: Fluoride-specific ion channel FluC (127 aa).

A run of 2 helical transmembrane segments spans residues 4-24 and 36-56; these read WFWI…LSTW and GTLA…EIAA. The Na(+) site is built by Gly75 and Thr78. Residues 100–120 traverse the membrane as a helical segment; sequence LANIAITLVVCLLAGVLGMVV.

This sequence belongs to the fluoride channel Fluc/FEX (TC 1.A.43) family.

The protein resides in the cell inner membrane. It carries out the reaction fluoride(in) = fluoride(out). With respect to regulation, na(+) is not transported, but it plays an essential structural role and its presence is essential for fluoride channel function. In terms of biological role, fluoride-specific ion channel. Important for reducing fluoride concentration in the cell, thus reducing its toxicity. This chain is Fluoride-specific ion channel FluC, found in Sorangium cellulosum (strain So ce56) (Polyangium cellulosum (strain So ce56)).